A 292-amino-acid chain; its full sequence is NAD kinase (292 aa).

Residue Asp73 is the Proton acceptor of the active site. NAD(+)-binding positions include Asp73–Gly74, Asn147–Glu148, His158, Arg175, Asp177, Thr188–Ser193, and Gln247.

Belongs to the NAD kinase family. A divalent metal cation is required as a cofactor.

The protein localises to the cytoplasm. It catalyses the reaction NAD(+) + ATP = ADP + NADP(+) + H(+). In terms of biological role, involved in the regulation of the intracellular balance of NAD and NADP, and is a key enzyme in the biosynthesis of NADP. Catalyzes specifically the phosphorylation on 2'-hydroxyl of the adenosine moiety of NAD to yield NADP. The sequence is that of NAD kinase from Escherichia coli O7:K1 (strain IAI39 / ExPEC).